The following is a 66-amino-acid chain: Heat-stable enterotoxin (66 aa).

The signal sequence occupies residues methionine 1–glycine 19. Positions glutamine 20 to proline 50 are excised as a propeptide. Cystine bridges form between cysteine 54–cysteine 59, cysteine 55–cysteine 63, and cysteine 58–cysteine 66.

It belongs to the heat-stable enterotoxin family.

It localises to the secreted. Its function is as follows. Toxin which activates the particulate form of guanylate cyclase and increases cyclic GMP levels within the host intestinal epithelial cells. The protein is Heat-stable enterotoxin (yst) of Yersinia kristensenii.